Here is a 605-residue protein sequence, read N- to C-terminus: Conglutin beta 7 (605 aa).

Positions 1 to 30 (MARMRVRFPTLVLLLGILFLMAVSIGIAYG) are cleaved as a signal peptide. The span at 37–105 (NHERPGEREH…REPCREREQE (69 aa)) shows a compositional bias: basic and acidic residues. Disordered stretches follow at residues 37–193 (NHER…RFQT), 346–367 (LGNE…SYQD), and 382–405 (LRKH…NLRS). Low complexity predominate over residues 140 to 149 (QGSSSSSRKQ). The span at 150-179 (SGYERRQYHERREQRDEKEKEQDSRSDSRR) shows a compositional bias: basic and acidic residues. In terms of domain architecture, Cupin type-1 1 spans 184–342 (YHFSSERFQT…TFNTRYEEIQ (159 aa)). The region spanning 401 to 563 (FNLRSNESIY…TFPGSAQDVE (163 aa)) is the Cupin type-1 2 domain. N-linked (GlcNAc...) asparagine glycans are attached at residues asparagine 406 and asparagine 513. Residues 574–593 (FANAQPQQKQQREKEGRRGR) form a disordered region.

It belongs to the 7S seed storage protein family. As to quaternary structure, component of globulins complexes which accumulate in seeds.

Its function is as follows. Seed storage protein. Accumulates during seed development and is hydrolyzed after germination to provide a carbon and nitrogen source for the developing seedling. In Lupinus angustifolius (Narrow-leaved blue lupine), this protein is Conglutin beta 7.